A 264-amino-acid chain; its full sequence is tRNA pseudouridine synthase A (264 aa).

Residue Asp51 is the Nucleophile of the active site. Tyr109 serves as a coordination point for substrate.

The protein belongs to the tRNA pseudouridine synthase TruA family. Homodimer.

The catalysed reaction is uridine(38/39/40) in tRNA = pseudouridine(38/39/40) in tRNA. Formation of pseudouridine at positions 38, 39 and 40 in the anticodon stem and loop of transfer RNAs. The sequence is that of tRNA pseudouridine synthase A from Pasteurella multocida (strain Pm70).